The chain runs to 132 residues: Small ribosomal subunit protein uS11 (132 aa).

The disordered stretch occupies residues 1–24 (MAAQKQAARKPRRRDRKSVPVGQA). The span at 7 to 16 (AARKPRRRDR) shows a compositional bias: basic residues.

Belongs to the universal ribosomal protein uS11 family. In terms of assembly, part of the 30S ribosomal subunit. Interacts with proteins S7 and S18. Binds to IF-3.

Located on the platform of the 30S subunit, it bridges several disparate RNA helices of the 16S rRNA. Forms part of the Shine-Dalgarno cleft in the 70S ribosome. The chain is Small ribosomal subunit protein uS11 from Bifidobacterium adolescentis (strain ATCC 15703 / DSM 20083 / NCTC 11814 / E194a).